The chain runs to 201 residues: Recombination protein RecR (201 aa).

The segment at 60 to 75 adopts a C4-type zinc-finger fold; it reads CHECGNVDTSDPCTIC. Positions 83-178 constitute a Toprim domain; sequence SILVVVEDVS…KVTKLAHGVP (96 aa).

It belongs to the RecR family.

May play a role in DNA repair. It seems to be involved in an RecBC-independent recombinational process of DNA repair. It may act with RecF and RecO. This Methylobacterium nodulans (strain LMG 21967 / CNCM I-2342 / ORS 2060) protein is Recombination protein RecR.